A 110-amino-acid chain; its full sequence is Ig kappa chain V region 2717 (110 aa).

A framework-1 region spans residues valine 1–cysteine 23. The tract at residues glutamine 24–alanine 36 is complementarity-determining-1. A framework-2 region spans residues tryptophan 37–tyrosine 51. Residues threonine 52 to serine 58 form a complementarity-determining-2 region. Residues glycine 59–cysteine 90 are framework-3. The segment at glycine 91 to serine 99 is complementarity-determining-3. The interval phenylalanine 100–lysine 109 is framework-4.

This is Ig kappa chain V region 2717 from Oryctolagus cuniculus (Rabbit).